A 314-amino-acid chain; its full sequence is GATA zinc finger domain-containing protein 19 (314 aa).

This chain is GATA zinc finger domain-containing protein 19 (gtaS), found in Dictyostelium discoideum (Social amoeba).